We begin with the raw amino-acid sequence, 271 residues long: 5'-nucleotidase SurE (271 aa).

Positions 14, 15, 46, and 104 each coordinate a divalent metal cation.

Belongs to the SurE nucleotidase family. Requires a divalent metal cation as cofactor.

It is found in the cytoplasm. It carries out the reaction a ribonucleoside 5'-phosphate + H2O = a ribonucleoside + phosphate. Functionally, nucleotidase that shows phosphatase activity on nucleoside 5'-monophosphates. The protein is 5'-nucleotidase SurE of Gloeothece citriformis (strain PCC 7424) (Cyanothece sp. (strain PCC 7424)).